A 246-amino-acid polypeptide reads, in one-letter code: Probable transcriptional regulatory protein Rmag_0394 (246 aa).

This sequence belongs to the TACO1 family.

The protein localises to the cytoplasm. In Ruthia magnifica subsp. Calyptogena magnifica, this protein is Probable transcriptional regulatory protein Rmag_0394.